Consider the following 191-residue polypeptide: Potassium-transporting ATPase KdpC subunit (191 aa).

The helical transmembrane segment at 6-26 (PAILLFILLTLVTGGLYPLLT) threads the bilayer.

The protein belongs to the KdpC family. As to quaternary structure, the system is composed of three essential subunits: KdpA, KdpB and KdpC.

It is found in the cell inner membrane. Part of the high-affinity ATP-driven potassium transport (or Kdp) system, which catalyzes the hydrolysis of ATP coupled with the electrogenic transport of potassium into the cytoplasm. This subunit acts as a catalytic chaperone that increases the ATP-binding affinity of the ATP-hydrolyzing subunit KdpB by the formation of a transient KdpB/KdpC/ATP ternary complex. This Enterobacter sp. (strain 638) protein is Potassium-transporting ATPase KdpC subunit.